The following is a 1209-amino-acid chain: Phospholipid-transporting ATPase ID (1209 aa).

At 1 to 68 (MTVPKEIPEK…NIVTFLPVNL (68 aa)) the chain is on the cytoplasmic side. The disordered stretch occupies residues 12 to 36 (ARAGAPPSWSQKKPSWGTEEERRAR). Residues 69-89 (FEQFQEVANTYFLFLLILQLI) traverse the membrane as a helical segment. Over 90-91 (PQ) the chain is Exoplasmic loop. A helical membrane pass occupies residues 92–112 (ISSLSWFTTIVPLVLVLTITA). Topologically, residues 113-295 (VKDATDDYFR…TSIDRLMNTL (183 aa)) are cytoplasmic. Residues 296–316 (VLWIFGFLVCMGVILAIGNAI) form a helical membrane-spanning segment. The Exoplasmic loop portion of the chain corresponds to 317–338 (WEHEVGTRFQVYLPWDEAVDSA). The helical transmembrane segment at 339–359 (FFSGFLSFWSYIIILNTVVPI) threads the bilayer. Topologically, residues 360–898 (SLYVSVEVIR…KFLCYFFYKN (539 aa)) are cytoplasmic. Asp-411 acts as the 4-aspartylphosphate intermediate in catalysis. Asp-411, Lys-412, Thr-413, Glu-515, Phe-556, Lys-579, Arg-613, Thr-693, Gly-694, Asp-695, Arg-807, and Lys-813 together coordinate ATP. Mg(2+) is bound at residue Asp-411. Position 413 (Thr-413) interacts with Mg(2+). A Mg(2+)-binding site is contributed by Asp-833. ATP-binding residues include Asn-836 and Asp-837. Asp-837 is a Mg(2+) binding site. The chain crosses the membrane as a helical span at residues 899–919 (FAFTMVHFWFGFFCGFSAQTV). The Exoplasmic loop portion of the chain corresponds to 920-922 (YDQ). A helical membrane pass occupies residues 923–943 (YFITLYNIVYTSLPVLAMGVF). The Cytoplasmic portion of the chain corresponds to 944-972 (DQDVPEQRSMEYPKLYEPGQLNLLFNKRE). The helical transmembrane segment at 973-993 (FFICIAQGIYTSVLMFFIPYG) threads the bilayer. The Exoplasmic loop segment spans residues 994–1011 (VFAEATRDDGTQLADYQS). The chain crosses the membrane as a helical span at residues 1012 to 1032 (FAVTVATSLVIVVSVQIGLDT). The Cytoplasmic portion of the chain corresponds to 1033 to 1036 (GYWT). The chain crosses the membrane as a helical span at residues 1037-1057 (AINHFFIWGSLAVYFAILFAM). At 1058 to 1082 (HSNGLFDMFPNQFRFVGNAQNTLAQ) the chain is on the exoplasmic loop side. Residues 1083 to 1103 (PTVWLTIALTTAVCIMPVVAF) traverse the membrane as a helical segment. Topologically, residues 1104–1209 (RFLRLSLKPD…SGGAEKPLKG (106 aa)) are cytoplasmic. A Phosphoserine modification is found at Ser-1175. The interval 1179 to 1209 (RSSSSWIESLRRKKSDSANSPSGGAEKPLKG) is disordered.

It belongs to the cation transport ATPase (P-type) (TC 3.A.3) family. Type IV subfamily. In terms of assembly, component of a P4-ATPase flippase complex which consists of a catalytic alpha subunit ATP8B2 and an accessory beta subunit TMEM30A or TMEM30B. Mg(2+) serves as cofactor. Expressed in brain and testes (at protein level).

It is found in the cell membrane. It localises to the endoplasmic reticulum membrane. The enzyme catalyses ATP + H2O + phospholipidSide 1 = ADP + phosphate + phospholipidSide 2.. The catalysed reaction is a 1,2-diacyl-sn-glycero-3-phosphocholine(out) + ATP + H2O = a 1,2-diacyl-sn-glycero-3-phosphocholine(in) + ADP + phosphate + H(+). In terms of biological role, catalytic component of P4-ATPase flippase complex, which catalyzes the hydrolysis of ATP coupled to the transport of phosphatidylcholine (PC) from the outer to the inner leaflet of the plasma membrane. May contribute to the maintenance of membrane lipid asymmetry. This chain is Phospholipid-transporting ATPase ID, found in Mus musculus (Mouse).